Reading from the N-terminus, the 302-residue chain is MNLTTNGFQRNLPSSLGNMEMIEFLDISHNSFHGKLPRSFLKGCDSLIVLKLSHKKLSEEVFPEASNFFSILELSMDNNLFTGKIGRGLQSLRSLIMLDISNNNLSGVIPSWFDQLQDLHSLQISNNLLEGEVPISLFNMSSLQLLALSANSLSGDLPQAISGYGALKVLLLRDNNLSGVIPDTLLGKNIIVLDLRNNRLSGNIPEFINTQYIRILLLRGNNLTGSIPRRLCAVRSIHLLDLANNKLNGSIPSCLRNASLGLGRGGYIRRLFIIITFFLWEHLSVHFSNLCSCKMGLLSIMS.

LRR repeat units lie at residues 1–19 (MNLT…LGNM), 20–43 (EMIE…FLKG), and 45–70 (DSLI…NFFS). The LRR 4; degenerate repeat unit spans residues 72 to 91 (LELSMDNNLFTGKIGRGLQS). 7 LRR repeats span residues 92–115 (LRSL…WFDQ), 116–140 (LQDL…LFNM), 142–164 (SLQL…ISGY), 166–188 (ALKV…LLGK), 190–211 (IIVL…INTQ), 213–234 (IRIL…LCAV), and 235–258 (RSIH…LRNA).

This sequence belongs to the RLP family.

The chain is Putative receptor-like protein 16 from Arabidopsis thaliana (Mouse-ear cress).